Here is a 56-residue protein sequence, read N- to C-terminus: UPF0391 membrane protein Noc_0482 (56 aa).

2 consecutive transmembrane segments (helical) span residues 1-21 and 29-49; these read MFGW…FGFT and HIAW…LLLG.

The protein belongs to the UPF0391 family.

It is found in the cell membrane. The polypeptide is UPF0391 membrane protein Noc_0482 (Nitrosococcus oceani (strain ATCC 19707 / BCRC 17464 / JCM 30415 / NCIMB 11848 / C-107)).